Consider the following 691-residue polypeptide: Elongation factor G (691 aa).

Positions 8–283 (KKVRNIGIAA…AVVAYLPAPD (276 aa)) constitute a tr-type G domain. GTP is bound by residues 17 to 24 (AHIDAGKT), 81 to 85 (DTPGH), and 135 to 138 (NKMD).

The protein belongs to the TRAFAC class translation factor GTPase superfamily. Classic translation factor GTPase family. EF-G/EF-2 subfamily.

It is found in the cytoplasm. In terms of biological role, catalyzes the GTP-dependent ribosomal translocation step during translation elongation. During this step, the ribosome changes from the pre-translocational (PRE) to the post-translocational (POST) state as the newly formed A-site-bound peptidyl-tRNA and P-site-bound deacylated tRNA move to the P and E sites, respectively. Catalyzes the coordinated movement of the two tRNA molecules, the mRNA and conformational changes in the ribosome. This chain is Elongation factor G, found in Campylobacter jejuni subsp. jejuni serotype O:23/36 (strain 81-176).